Reading from the N-terminus, the 290-residue chain is 33 kDa chaperonin (290 aa).

Cystine bridges form between cysteine 231/cysteine 233 and cysteine 263/cysteine 266.

It belongs to the HSP33 family. Post-translationally, under oxidizing conditions two disulfide bonds are formed involving the reactive cysteines. Under reducing conditions zinc is bound to the reactive cysteines and the protein is inactive.

It localises to the cytoplasm. Redox regulated molecular chaperone. Protects both thermally unfolding and oxidatively damaged proteins from irreversible aggregation. Plays an important role in the bacterial defense system toward oxidative stress. The protein is 33 kDa chaperonin of Thermotoga maritima (strain ATCC 43589 / DSM 3109 / JCM 10099 / NBRC 100826 / MSB8).